Consider the following 442-residue polypeptide: MGVYSLLVLGATTSLTGAASACQTWPSCNGQWFALQSLDLVVVWGHRTAAALTGLAVVGAAVLAWRTGASRRVRTAVTLALALYPVQVVIGAYTAMSAGAAPFTGVHLTLGVGIFASLVVALAWTLDAQTGDLPSAEWEGEPRHTDDGDPTQPGIVRAYVQLMKPRLMWLLCLVAGAGMALASSQLGAGQQLSAATVVLTLGGGVLSIGASGTFNHVLEREQDEKMARTDDRPVVTDRIPPRNALAFGVVLGVASLAAFAAVNLLTAVLGLTAIAFYSIVYTLVLKPNTRQSTVIGGAAGALPALIGWVAVTGAVGVGGVVLAGVIFLWTPAHFYNLALAYKDDYERGGFPLMPVVEGEAKTRRHIVYYIGATLASAVVLAELTGLGPLYAATTVLLGAVFLYFAIRLHRERDRRAAMRSFHASNAYLGCLLVAVVLDTMVV.

The unknown stretch occupies residues 1 to 167; it reads MGVYSLLVLG…AYVQLMKPRL (167 aa). 11 helical membrane-spanning segments follow: residues 49-69, 76-96, 106-126, 167-187, 194-214, 245-265, 267-287, 308-328, 365-385, 386-406, and 421-441; these read AAALTGLAVVGAAVLAWRTGA, AVTLALALYPVQVVIGAYTAM, VHLTLGVGIFASLVVALAWTL, LMWLLCLVAGAGMALASSQLG, AATVVLTLGGGVLSIGASGTF, LAFGVVLGVASLAAFAAVNLL, AVLGLTAIAFYSIVYTLVLKP, WVAVTGAVGVGGVVLAGVIFL, HIVYYIGATLASAVVLAELTG, LGPLYAATTVLLGAVFLYFAI, and FHASNAYLGCLLVAVVLDTMV. Residues 168–439 are prenyltransferase; that stretch reads MWLLCLVAGA…CLLVAVVLDT (272 aa).

The protein in the C-terminal section; belongs to the UbiA prenyltransferase family. Protoheme IX farnesyltransferase subfamily.

Its subcellular location is the cell membrane. It carries out the reaction heme b + (2E,6E)-farnesyl diphosphate + H2O = Fe(II)-heme o + diphosphate. The protein operates within porphyrin-containing compound metabolism; heme O biosynthesis; heme O from protoheme: step 1/1. Converts heme B (protoheme IX) to heme O by substitution of the vinyl group on carbon 2 of heme B porphyrin ring with a hydroxyethyl farnesyl side group. The protein is Protoheme IX farnesyltransferase (ctaB) of Halobacterium salinarum (strain ATCC 700922 / JCM 11081 / NRC-1) (Halobacterium halobium).